The sequence spans 415 residues: MHPVLRQMRPPPQQRQEQEQRQTCRAPSPSPTASGGATSAADAAADGDYEPPRRRARHYLDLEEGEGLARLGAPSPERHPRVQLKRDTREAYVPRQNLFRDREGEEPEEMRDRKFHAGRELRHGLNRERLLREEDFEPDARTGISPARAHVAAADLVTAYEQTVNQEINFQKSFNNHVRTLVAREEVAIGLMHLWDFVSALEQNPNSKPLMAQLFLIVQHSRDNEAFRDALLNIVEPEGRWLLDLINILQSIVVQERSLSLADKVAAINYSMLSLGKFYARKIYHTPYVPIDKEVKIEGFYMRMALKVLTLSDDLGVYRNERIHKAVSVSRRRELSDRELMHSLQRALAGTGSGDREAESYFDAGADLRWAPSRRALEAAGAGPGLAVAPARAGNVGGVEEYDEDDEYEPEDGEY.

Disordered regions lie at residues 1–56 (MHPV…RRRA) and 66–85 (EGLA…VQLK). The tract at residues 1–173 (MHPVLRQMRP…VNQEINFQKS (173 aa)) is interaction with packaging protein 1. Residues 31-46 (PTASGGATSAADAAAD) show a composition bias toward low complexity. Position 75 is a phosphoserine; by host (S75). Residues 76 to 85 (PERHPRVQLK) are compositionally biased toward basic and acidic residues. S360 carries the post-translational modification Phosphoserine; by host. The span at 381 to 394 (GAGPGLAVAPARAG) shows a compositional bias: low complexity. Residues 381-415 (GAGPGLAVAPARAGNVGGVEEYDEDDEYEPEDGEY) form a disordered region. Over residues 400–415 (EEYDEDDEYEPEDGEY) the composition is skewed to acidic residues.

This sequence belongs to the adenoviridae packaging protein 3 family. As to quaternary structure, part of the genome packaging complex composed of packaging proteins 1, 2 and 3; this complex specifically binds to the packaging sequence on the left end of viral genomic DNA and performs packaging of the viral genome. Interacts with hexon-linking protein IIIa; this interaction is required to promote correct genome packaging. Post-translationally, cleaved at different sites by the viral protease during virion maturation.

The protein localises to the host nucleus. Its function is as follows. Involved in viral genome packaging through its interaction with packaging proteins 1 and 2. After proteolytic cleavage by adenovirus protease, L1 52/55k protein is removed from the capsid during viral maturation. The protein is Packaging protein 3 of Human adenovirus C serotype 2 (HAdV-2).